Consider the following 393-residue polypeptide: CCA-adding enzyme (393 aa).

ATP is bound by residues G27 and R30. Residues G27 and R30 each contribute to the CTP site. Mg(2+) contacts are provided by D40 and D42. ATP-binding residues include R111, D154, R157, R160, and R163. The CTP site is built by R111, D154, R157, R160, and R163.

This sequence belongs to the tRNA nucleotidyltransferase/poly(A) polymerase family. Bacterial CCA-adding enzyme type 3 subfamily. As to quaternary structure, homodimer. Mg(2+) is required as a cofactor.

The catalysed reaction is a tRNA precursor + 2 CTP + ATP = a tRNA with a 3' CCA end + 3 diphosphate. The enzyme catalyses a tRNA with a 3' CCA end + 2 CTP + ATP = a tRNA with a 3' CCACCA end + 3 diphosphate. Functionally, catalyzes the addition and repair of the essential 3'-terminal CCA sequence in tRNAs without using a nucleic acid template. Adds these three nucleotides in the order of C, C, and A to the tRNA nucleotide-73, using CTP and ATP as substrates and producing inorganic pyrophosphate. tRNA 3'-terminal CCA addition is required both for tRNA processing and repair. Also involved in tRNA surveillance by mediating tandem CCA addition to generate a CCACCA at the 3' terminus of unstable tRNAs. While stable tRNAs receive only 3'-terminal CCA, unstable tRNAs are marked with CCACCA and rapidly degraded. This is CCA-adding enzyme from Listeria monocytogenes serotype 4a (strain HCC23).